A 411-amino-acid chain; its full sequence is Dual-specificity RNA methyltransferase RlmN (411 aa).

Catalysis depends on Glu-125, which acts as the Proton acceptor. The Radical SAM core domain maps to Glu-131–Leu-380. Residues Cys-138 and Cys-383 are joined by a disulfide bond. Cys-145, Cys-149, and Cys-152 together coordinate [4Fe-4S] cluster. Residues Gly-209–Glu-210, Ser-241, Ser-263–His-265, and Asn-340 contribute to the S-adenosyl-L-methionine site. The S-methylcysteine intermediate role is filled by Cys-383.

It belongs to the radical SAM superfamily. RlmN family. [4Fe-4S] cluster serves as cofactor.

It localises to the cytoplasm. It carries out the reaction adenosine(2503) in 23S rRNA + 2 reduced [2Fe-2S]-[ferredoxin] + 2 S-adenosyl-L-methionine = 2-methyladenosine(2503) in 23S rRNA + 5'-deoxyadenosine + L-methionine + 2 oxidized [2Fe-2S]-[ferredoxin] + S-adenosyl-L-homocysteine. The enzyme catalyses adenosine(37) in tRNA + 2 reduced [2Fe-2S]-[ferredoxin] + 2 S-adenosyl-L-methionine = 2-methyladenosine(37) in tRNA + 5'-deoxyadenosine + L-methionine + 2 oxidized [2Fe-2S]-[ferredoxin] + S-adenosyl-L-homocysteine. Its function is as follows. Specifically methylates position 2 of adenine 2503 in 23S rRNA and position 2 of adenine 37 in tRNAs. m2A2503 modification seems to play a crucial role in the proofreading step occurring at the peptidyl transferase center and thus would serve to optimize ribosomal fidelity. This is Dual-specificity RNA methyltransferase RlmN from Brucella abortus (strain S19).